A 331-amino-acid polypeptide reads, in one-letter code: UDP-GalNAc:beta-1,3-N-acetylgalactosaminyltransferase 1 (331 aa).

At 1–20 (MASALWTVLPSRMSLRSLQW) the chain is on the cytoplasmic side. A helical; Signal-anchor for type II membrane protein membrane pass occupies residues 21 to 43 (SLLLLSLLSFLVMWYLSLPHYNV). Residues 44 to 331 (IERVNWMYFY…VMLRNTTCHY (288 aa)) are Lumenal-facing. Asn72, Asn154, Asn198, Asn212, and Asn326 each carry an N-linked (GlcNAc...) asparagine glycan.

Belongs to the glycosyltransferase 31 family. It depends on Mg(2+) as a cofactor.

It is found in the golgi apparatus membrane. It carries out the reaction a globoside Gb3Cer (d18:1(4E)) + UDP-N-acetyl-alpha-D-galactosamine = a globoside Gb4Cer (d18:1(4E)) + UDP + H(+). The protein operates within protein modification; protein glycosylation. Functionally, transfers N-acetylgalactosamine onto globotriaosylceramide. Plays a critical role in preimplantation stage embryonic development. This chain is UDP-GalNAc:beta-1,3-N-acetylgalactosaminyltransferase 1 (B3GALNT1), found in Pongo abelii (Sumatran orangutan).